Here is an 86-residue protein sequence, read N- to C-terminus: Small ribosomal subunit protein bS20 (86 aa).

The interval 1–25 is disordered; that stretch reads MANIKSQMKRIKTNEANRQRNKAVK.

It belongs to the bacterial ribosomal protein bS20 family.

Binds directly to 16S ribosomal RNA. The sequence is that of Small ribosomal subunit protein bS20 from Saccharopolyspora erythraea (strain ATCC 11635 / DSM 40517 / JCM 4748 / NBRC 13426 / NCIMB 8594 / NRRL 2338).